The sequence spans 388 residues: Chorismate synthase (388 aa).

The NADP(+) site is built by Arg-39 and Arg-45. The segment at 95-118 (EKNEKSRRVSRPRPGHADLVGGMK) is disordered. Residues 130–132 (RSS), 251–252 (NA), Gly-296, 311–315 (KPIPT), and Arg-337 each bind FMN.

It belongs to the chorismate synthase family. Homotetramer. The cofactor is FMNH2.

It carries out the reaction 5-O-(1-carboxyvinyl)-3-phosphoshikimate = chorismate + phosphate. The protein operates within metabolic intermediate biosynthesis; chorismate biosynthesis; chorismate from D-erythrose 4-phosphate and phosphoenolpyruvate: step 7/7. Catalyzes the anti-1,4-elimination of the C-3 phosphate and the C-6 proR hydrogen from 5-enolpyruvylshikimate-3-phosphate (EPSP) to yield chorismate, which is the branch point compound that serves as the starting substrate for the three terminal pathways of aromatic amino acid biosynthesis. This reaction introduces a second double bond into the aromatic ring system. In Listeria monocytogenes serovar 1/2a (strain ATCC BAA-679 / EGD-e), this protein is Chorismate synthase.